We begin with the raw amino-acid sequence, 351 residues long: MATNDEKSKALAAALGQIEKQFGKGAIMKLGDTQALDVESISTGSIGLDVALGIGGLPMGRVVEIFGPESSGKTTLTLSVIAQAQKAGKVCAFIDAEHALDPIYAAKLGVDVKELLVSQPDNGEQALEICDALVRSGAVDVIIVDSVAALTPKAEIEGDMGDSHVGLQARLMSQALRKLTGQIKNANCLVVFINQIRMKIGVMFGNPETTTGGNALKFYSSVRLDIRRVGAVKDGDEIIGNETRVKVVKNKLAPPFRQVDFQILYGEGISKNGELIELGVKHKLVDKSGAWYAYNGDKIGQGKANAMKWLAENPTVAAELENKIRAELLANPEQALLADIETNSEEKEDFE.

67 to 74 contacts ATP; sequence GPESSGKT.

This sequence belongs to the RecA family.

The protein localises to the cytoplasm. Can catalyze the hydrolysis of ATP in the presence of single-stranded DNA, the ATP-dependent uptake of single-stranded DNA by duplex DNA, and the ATP-dependent hybridization of homologous single-stranded DNAs. It interacts with LexA causing its activation and leading to its autocatalytic cleavage. The protein is Protein RecA of Mannheimia succiniciproducens (strain KCTC 0769BP / MBEL55E).